A 726-amino-acid chain; its full sequence is DNA ligase (726 aa).

NAD(+)-binding positions include 34–38 (DAEYD), 83–84 (SL), and E115. The N6-AMP-lysine intermediate role is filled by K117. NAD(+) contacts are provided by R138, E190, K306, and K330. Residues C424, C427, C442, and C448 each contribute to the Zn(2+) site. The BRCT domain maps to 608-698 (SRGNALAGKT…RTADDQATPA (91 aa)). A disordered region spans residues 690-726 (TADDQATPASDRRAATASVPPSDDAPGSPRQLDFDLT).

Belongs to the NAD-dependent DNA ligase family. LigA subfamily. Mg(2+) serves as cofactor. Requires Mn(2+) as cofactor.

The enzyme catalyses NAD(+) + (deoxyribonucleotide)n-3'-hydroxyl + 5'-phospho-(deoxyribonucleotide)m = (deoxyribonucleotide)n+m + AMP + beta-nicotinamide D-nucleotide.. DNA ligase that catalyzes the formation of phosphodiester linkages between 5'-phosphoryl and 3'-hydroxyl groups in double-stranded DNA using NAD as a coenzyme and as the energy source for the reaction. It is essential for DNA replication and repair of damaged DNA. In Roseiflexus sp. (strain RS-1), this protein is DNA ligase.